The chain runs to 176 residues: MMRSLNRCSKHRAAWLLLALTTFSLELVALYFQHVMLLKPCVLCVYQRCALYGVVAAGLVGAIAPATPLRFSGLAIWLYSAWEGLQLAMKHTDIQLHPSPFVTCDFFVSFPAWLPLDKWLPSVFSASGDCAVRQWHFLSLEMPQWMIVIFGAYLAVAVLILLAQFFPPRKRDLFSR.

Residues 1–14 (MMRSLNRCSKHRAA) are Cytoplasmic-facing. A helical transmembrane segment spans residues 15 to 31 (WLLLALTTFSLELVALY). Topologically, residues 32–49 (FQHVMLLKPCVLCVYQRC) are periplasmic. A disulfide bridge connects residues cysteine 41 and cysteine 44. A helical membrane pass occupies residues 50-65 (ALYGVVAAGLVGAIAP). The Cytoplasmic portion of the chain corresponds to 66–71 (ATPLRF). The helical transmembrane segment at 72-89 (SGLAIWLYSAWEGLQLAM) threads the bilayer. At 90–144 (KHTDIQLHPSPFVTCDFFVSFPAWLPLDKWLPSVFSASGDCAVRQWHFLSLEMPQ) the chain is on the periplasmic side. A disulfide bridge links cysteine 104 with cysteine 130. The chain crosses the membrane as a helical span at residues 145–163 (WMIVIFGAYLAVAVLILLA). Topologically, residues 164–176 (QFFPPRKRDLFSR) are cytoplasmic.

Belongs to the DsbB family.

The protein localises to the cell inner membrane. Its function is as follows. Required for disulfide bond formation in some periplasmic proteins. Acts by oxidizing the DsbA protein. The sequence is that of Disulfide bond formation protein B from Sodalis glossinidius (strain morsitans).